The following is a 507-amino-acid chain: AMP phosphorylase (507 aa).

AMP contacts are provided by residues G168, 194-199 (SRAITG), and T203. D256 acts as the Proton donor in catalysis. Residues S264 and K288 each contribute to the AMP site.

This sequence belongs to the thymidine/pyrimidine-nucleoside phosphorylase family. Type 2 subfamily.

The enzyme catalyses AMP + phosphate = alpha-D-ribose 1,5-bisphosphate + adenine. It catalyses the reaction CMP + phosphate = cytosine + alpha-D-ribose 1,5-bisphosphate. The catalysed reaction is UMP + phosphate = alpha-D-ribose 1,5-bisphosphate + uracil. Its function is as follows. Catalyzes the conversion of AMP and phosphate to adenine and ribose 1,5-bisphosphate (R15P). Exhibits phosphorylase activity toward CMP and UMP in addition to AMP. Functions in an archaeal AMP degradation pathway, together with R15P isomerase and RubisCO. In Methanosarcina mazei (strain ATCC BAA-159 / DSM 3647 / Goe1 / Go1 / JCM 11833 / OCM 88) (Methanosarcina frisia), this protein is AMP phosphorylase.